The sequence spans 217 residues: Cytidylate kinase (217 aa).

Residue 9-17 (GPAGSGKTT) coordinates ATP.

Belongs to the cytidylate kinase family. Type 1 subfamily.

It is found in the cytoplasm. The enzyme catalyses CMP + ATP = CDP + ADP. The catalysed reaction is dCMP + ATP = dCDP + ADP. In Thermosipho melanesiensis (strain DSM 12029 / CIP 104789 / BI429), this protein is Cytidylate kinase.